Here is a 408-residue protein sequence, read N- to C-terminus: Probable E3 ubiquitin-protein ligase makorin-1 (408 aa).

2 consecutive C3H1-type zinc fingers follow at residues Trp34–Ala61 and Ser63–Pro90. Disordered regions lie at residues Pro90–Ile114 and Glu154–Pro173. Positions Lys162–Pro173 are enriched in basic and acidic residues. A C3H1-type 3 zinc finger spans residues Glu174–Pro201. The interval Cys202–His229 is makorin-type Cys-His. The RING-type zinc finger occupies Cys247 to Arg301. The segment at Ala330–Pro359 adopts a C3H1-type 4 zinc-finger fold. Residues Ile363–Leu408 are disordered.

It catalyses the reaction S-ubiquitinyl-[E2 ubiquitin-conjugating enzyme]-L-cysteine + [acceptor protein]-L-lysine = [E2 ubiquitin-conjugating enzyme]-L-cysteine + N(6)-ubiquitinyl-[acceptor protein]-L-lysine.. Its pathway is protein modification; protein ubiquitination. Its function is as follows. E3 ubiquitin ligase catalyzing the covalent attachment of ubiquitin moieties onto substrate proteins. This chain is Probable E3 ubiquitin-protein ligase makorin-1 (mkrn1), found in Xenopus laevis (African clawed frog).